The sequence spans 331 residues: Beta-ketoacyl-[acyl-carrier-protein] synthase III (331 aa).

Active-site residues include C115 and H255. An ACP-binding region spans residues 256–260 (QANFR). N285 is an active-site residue.

The protein belongs to the thiolase-like superfamily. FabH family. Homodimer.

The protein localises to the cytoplasm. It catalyses the reaction malonyl-[ACP] + acetyl-CoA + H(+) = 3-oxobutanoyl-[ACP] + CO2 + CoA. It functions in the pathway lipid metabolism; fatty acid biosynthesis. Functionally, catalyzes the condensation reaction of fatty acid synthesis by the addition to an acyl acceptor of two carbons from malonyl-ACP. Catalyzes the first condensation reaction which initiates fatty acid synthesis and may therefore play a role in governing the total rate of fatty acid production. Possesses both acetoacetyl-ACP synthase and acetyl transacylase activities. Its substrate specificity determines the biosynthesis of branched-chain and/or straight-chain of fatty acids. The sequence is that of Beta-ketoacyl-[acyl-carrier-protein] synthase III from Helicobacter pylori (strain Shi470).